A 395-amino-acid polypeptide reads, in one-letter code: Lipoyl synthase, mitochondrial (395 aa).

The transit peptide at 1–14 (MISLRSISRSPAVQ) directs the protein to the mitochondrion. The [4Fe-4S] cluster site is built by Cys-112, Cys-117, Cys-123, Cys-142, Cys-146, Cys-149, and Ser-357. Residues 127–346 (KKSEATATIM…RDTALQMGFL (220 aa)) form the Radical SAM core domain.

The protein belongs to the radical SAM superfamily. Lipoyl synthase family. [4Fe-4S] cluster is required as a cofactor.

It is found in the mitochondrion. The catalysed reaction is [[Fe-S] cluster scaffold protein carrying a second [4Fe-4S](2+) cluster] + N(6)-octanoyl-L-lysyl-[protein] + 2 oxidized [2Fe-2S]-[ferredoxin] + 2 S-adenosyl-L-methionine + 4 H(+) = [[Fe-S] cluster scaffold protein] + N(6)-[(R)-dihydrolipoyl]-L-lysyl-[protein] + 4 Fe(3+) + 2 hydrogen sulfide + 2 5'-deoxyadenosine + 2 L-methionine + 2 reduced [2Fe-2S]-[ferredoxin]. Its pathway is protein modification; protein lipoylation via endogenous pathway; protein N(6)-(lipoyl)lysine from octanoyl-[acyl-carrier-protein]: step 2/2. In terms of biological role, catalyzes the radical-mediated insertion of two sulfur atoms into the C-6 and C-8 positions of the octanoyl moiety bound to the lipoyl domains of lipoate-dependent enzymes, thereby converting the octanoylated domains into lipoylated derivatives. This is Lipoyl synthase, mitochondrial from Debaryomyces hansenii (strain ATCC 36239 / CBS 767 / BCRC 21394 / JCM 1990 / NBRC 0083 / IGC 2968) (Yeast).